Reading from the N-terminus, the 588-residue chain is 2-succinyl-5-enolpyruvyl-6-hydroxy-3-cyclohexene-1-carboxylate synthase (588 aa).

The tract at residues 1 to 22 (MTTTGSLPAQPSSTSPRTGNPS) is disordered.

It belongs to the TPP enzyme family. MenD subfamily. In terms of assembly, homodimer. Requires Mg(2+) as cofactor. The cofactor is Mn(2+). It depends on thiamine diphosphate as a cofactor.

It carries out the reaction isochorismate + 2-oxoglutarate + H(+) = 5-enolpyruvoyl-6-hydroxy-2-succinyl-cyclohex-3-ene-1-carboxylate + CO2. It participates in quinol/quinone metabolism; 1,4-dihydroxy-2-naphthoate biosynthesis; 1,4-dihydroxy-2-naphthoate from chorismate: step 2/7. Its pathway is quinol/quinone metabolism; menaquinone biosynthesis. Catalyzes the thiamine diphosphate-dependent decarboxylation of 2-oxoglutarate and the subsequent addition of the resulting succinic semialdehyde-thiamine pyrophosphate anion to isochorismate to yield 2-succinyl-5-enolpyruvyl-6-hydroxy-3-cyclohexene-1-carboxylate (SEPHCHC). This Clavibacter michiganensis subsp. michiganensis (strain NCPPB 382) protein is 2-succinyl-5-enolpyruvyl-6-hydroxy-3-cyclohexene-1-carboxylate synthase.